Consider the following 123-residue polypeptide: Large ribosomal subunit protein bL17 (123 aa).

Belongs to the bacterial ribosomal protein bL17 family. Part of the 50S ribosomal subunit. Contacts protein L32.

This Borreliella burgdorferi (strain ATCC 35210 / DSM 4680 / CIP 102532 / B31) (Borrelia burgdorferi) protein is Large ribosomal subunit protein bL17.